A 222-amino-acid chain; its full sequence is Peptide methionine sulfoxide reductase MsrA 1 (222 aa).

Cys-57 is a catalytic residue.

This sequence belongs to the MsrA Met sulfoxide reductase family.

It carries out the reaction L-methionyl-[protein] + [thioredoxin]-disulfide + H2O = L-methionyl-(S)-S-oxide-[protein] + [thioredoxin]-dithiol. The catalysed reaction is [thioredoxin]-disulfide + L-methionine + H2O = L-methionine (S)-S-oxide + [thioredoxin]-dithiol. Functionally, has an important function as a repair enzyme for proteins that have been inactivated by oxidation. Catalyzes the reversible oxidation-reduction of methionine sulfoxide in proteins to methionine. This Synechocystis sp. (strain ATCC 27184 / PCC 6803 / Kazusa) protein is Peptide methionine sulfoxide reductase MsrA 1 (msrA1).